A 934-amino-acid chain; its full sequence is Protein unc-45 homolog B (934 aa).

TPR repeat units follow at residues 9 to 42 (SVQL…CKKE), 48 to 81 (AVIY…DAAD), and 83 to 115 (KALY…EPKN). 3 ARM repeats span residues 174-213 (DAGA…GMCT), 216-255 (RARA…CVND), and 753-792 (DKLR…NLVC).

As to quaternary structure, interacts with apobec2a, apobec2b, hsp90a.1, hsp90a.2, hsp90ab1 and myosin. Expressed in striated muscle tissue including somites, heart and craniofacial muscle. Detected in mesoderm adjacent to the dorsal midline during the late gastrula stages and in somitic mesoderm during development of trunk skeletal muscle. Also expressed in cranial skeletal muscle and in cardiac and smooth muscle. Detected in somitic muscle and heart primordium of 24 hour embryos. At later stages, expressed in muscles of pectoral fins, jaw, branchial arches and eye.

It is found in the cytoplasm. It localises to the myofibril. The protein resides in the sarcomere. Its subcellular location is the z line. The protein localises to the a band. It is found in the perinuclear region. Functionally, acts as a co-chaperone for HSP90 and is required for proper folding of the myosin motor domain. Plays a role in sarcomere formation during muscle cell development. Required for myoseptal integrity, myofiber attachment, motility and craniofacial development. Is necessary for normal early lens development. The sequence is that of Protein unc-45 homolog B from Danio rerio (Zebrafish).